An 847-amino-acid polypeptide reads, in one-letter code: Matrin-3 (847 aa).

At serine 2 the chain carries N-acetylserine. At lysine 3 the chain carries N6-acetyllysine; alternate. Residue lysine 3 forms a Glycyl lysine isopeptide (Lys-Gly) (interchain with G-Cter in SUMO2); alternate linkage. A phosphoserine mark is found at serine 4, serine 9, serine 11, serine 14, serine 22, serine 41, serine 118, and serine 126. Residues lysine 132 and lysine 146 each participate in a glycyl lysine isopeptide (Lys-Gly) (interchain with G-Cter in SUMO2) cross-link. 2 disordered regions span residues 146–174 and 187–214; these read KRRR…YRVP and DSFD…SGYY. Residue threonine 150 is modified to Phosphothreonine. Residue serine 157 is modified to Phosphoserine. Tyrosine 158 is subject to Phosphotyrosine. A compositionally biased stretch (basic and acidic residues) spans 160-174; it reads RDGRSATREPPYRVP. Serine 164, serine 188, and serine 195 each carry phosphoserine. Positions 201–214 are enriched in basic and acidic residues; the sequence is DYDHGSRSQESGYY. Phosphotyrosine is present on tyrosine 202. Residues serine 206, serine 208, and serine 211 each carry the phosphoserine modification. The residue at position 219 (tyrosine 219) is a Phosphotyrosine. A Phosphoserine modification is found at serine 234. Lysine 245 is covalently cross-linked (Glycyl lysine isopeptide (Lys-Gly) (interchain with G-Cter in SUMO2)). Residue serine 264 is modified to Phosphoserine. Lysine 269 is covalently cross-linked (Glycyl lysine isopeptide (Lys-Gly) (interchain with G-Cter in SUMO2)). A Phosphoserine modification is found at serine 275. Residues 342–394 are disordered; sequence PFMLQQSTNPAPGILGPPPPSFHLGGPAVGPRGNLGAGNGNLQGPRHMQKGRV. In terms of domain architecture, RRM 1 spans 398 to 473; that stretch reads RVVHIMDFQR…KPVRVHLSQK (76 aa). Residues lysine 478, lysine 487, and lysine 491 each participate in a glycyl lysine isopeptide (Lys-Gly) (interchain with G-Cter in SUMO2) cross-link. The RRM 2 domain occupies 496–571; it reads RVIHLSNLPH…RCVKVDLSEK (76 aa). A phosphoserine mark is found at serine 509 and serine 511. Lysine 515 participates in a covalent cross-link: Glycyl lysine isopeptide (Lys-Gly) (interchain with G-Cter in SUMO2). An N6-acetyllysine; alternate modification is found at lysine 522. Residue lysine 522 forms a Glycyl lysine isopeptide (Lys-Gly) (interchain with G-Cter in SUMO2); alternate linkage. Position 533 is a phosphoserine (serine 533). Glycyl lysine isopeptide (Lys-Gly) (interchain with G-Cter in SUMO2) cross-links involve residues lysine 554 and lysine 555. Lysine 571 is modified (N6-acetyllysine). Residues 588-786 are disordered; that stretch reads KKDKSRKRSY…DEYRIGPYQP (199 aa). Residues serine 596, serine 598, serine 604, and serine 606 each carry the phosphoserine modification. Positions 600–643 are enriched in basic and acidic residues; sequence DGKESPSDKKSKTDGSQKTESSTEGKEQEEKSGEDGEKDTKDDQ. Glycyl lysine isopeptide (Lys-Gly) (interchain with G-Cter in SUMO2) cross-links involve residues lysine 617 and lysine 630. The segment covering 653–665 has biased composition (acidic residues); sequence ESEDELLVDEEEA. Residues serine 654, serine 671, serine 673, and serine 674 each carry the phosphoserine modification. A compositionally biased stretch (low complexity) spans 666–676; that stretch reads AALLESGSSVG. Threonine 679 carries the phosphothreonine modification. Serine 689 carries the phosphoserine modification. Over residues 689–704 the composition is skewed to basic and acidic residues; the sequence is SDGKKEPSDKAVKKDG. The Nuclear localization signal signature appears at 710 to 718; it reads AKKKLKKVD. Residues lysine 719 and lysine 736 each participate in a glycyl lysine isopeptide (Lys-Gly) (interchain with G-Cter in SUMO2) cross-link. Residue threonine 741 is modified to Phosphothreonine. A phosphoserine mark is found at serine 747, serine 759, and serine 766. A compositionally biased stretch (basic and acidic residues) spans 767–780; sequence DENKDDYTIPDEYR. A Glycyl lysine isopeptide (Lys-Gly) (interchain with G-Cter in SUMO2) cross-link involves residue lysine 770. The Matrin-type zinc-finger motif lies at 801–832; sequence FYCKLCSLFYTNEEVAKNTHCSSLPHYQKLKK. At lysine 836 the chain carries N6-acetyllysine; alternate. Lysine 836 is covalently cross-linked (Glycyl lysine isopeptide (Lys-Gly) (interchain with G-Cter in SUMO2); alternate).

In terms of assembly, part of a complex consisting of SFPQ, NONO and MATR3. Interacts with AGO1 and AGO2. Part of a complex composed at least of ASH2L, EMSY, HCFC1, HSPA8, CCAR2, MATR3, MKI67, RBBP5, TUBB2A, WDR5 and ZNF335; this complex may have a histone H3-specific methyltransferase activity. Interacts with TARDBP. Part of the HDP-RNP complex composed of at least HEXIM1, PRKDC, XRCC5, XRCC6, paraspeckle proteins (SFPQ, NONO, PSPC1, RBM14, and MATR3) and NEAT1 RNA. Interacts with FUS. Interacts with IGF2BP1; the interaction is enhanced by SEPIN14P20 peptide RBPR. Interacts with IGF2BP2 and IGF2BP3. Interacts with RBPMS.

It localises to the nucleus matrix. Its function is as follows. May play a role in transcription or may interact with other nuclear matrix proteins to form the internal fibrogranular network. In association with the SFPQ-NONO heteromer may play a role in nuclear retention of defective RNAs. Plays a role in the regulation of DNA virus-mediated innate immune response by assembling into the HDP-RNP complex, a complex that serves as a platform for IRF3 phosphorylation and subsequent innate immune response activation through the cGAS-STING pathway. Binds to N6-methyladenosine (m6A)-containing mRNAs and contributes to MYC stability by binding to m6A-containing MYC mRNAs. May bind to specific miRNA hairpins. This chain is Matrin-3 (MATR3), found in Homo sapiens (Human).